Reading from the N-terminus, the 460-residue chain is Proline--tRNA ligase (460 aa).

The protein belongs to the class-II aminoacyl-tRNA synthetase family. ProS type 3 subfamily. As to quaternary structure, homodimer.

The protein resides in the cytoplasm. It carries out the reaction tRNA(Pro) + L-proline + ATP = L-prolyl-tRNA(Pro) + AMP + diphosphate. Its function is as follows. Catalyzes the attachment of proline to tRNA(Pro) in a two-step reaction: proline is first activated by ATP to form Pro-AMP and then transferred to the acceptor end of tRNA(Pro). The sequence is that of Proline--tRNA ligase from Methanococcus maripaludis (strain C7 / ATCC BAA-1331).